We begin with the raw amino-acid sequence, 464 residues long: Growth hormone-releasing hormone receptor (464 aa).

A signal peptide spans 1-22 (MDSLLWATWVLCLLNLWGVALG). The Extracellular segment spans residues 23–130 (HLHLECDFIT…EEKSYFSTVK (108 aa)). Intrachain disulfides connect cysteine 41–cysteine 64, cysteine 55–cysteine 96, and cysteine 78–cysteine 112. The N-linked (GlcNAc...) asparagine glycan is linked to asparagine 50. The chain crosses the membrane as a helical span at residues 131–151 (IIYTTGHSISIVALCVAIAIL). Topologically, residues 152–167 (VALRRLHCPRNYIHTQ) are cytoplasmic. A helical membrane pass occupies residues 168-188 (LFATFILKASAVFLKDAAVFQ). At 189–210 (GDSTDHCSMSTILCKVSVAVSH) the chain is on the extracellular side. Residues 211–231 (FATMTNFSWLLAEAVYLSCLL) traverse the membrane as a helical segment. Over 232 to 240 (ASTSPRSKP) the chain is Cytoplasmic. A helical transmembrane segment spans residues 241–261 (AFWWLVLAGWGLPVLCTGTWV). Residues 262–283 (GCKLAFEDTACWDLDDSSPYWW) lie on the Extracellular side of the membrane. The helical transmembrane segment at 284–304 (IIKGPIVLSVGVNFGLFLNII) threads the bilayer. The Cytoplasmic portion of the chain corresponds to 305–372 (CILLRKLGPA…QLPWRLSKST (68 aa)). A helical transmembrane segment spans residues 373–393 (LLLIPLFGIHYIIFNFLPDSA). Residues 394–398 (GLGIR) lie on the Extracellular side of the membrane. Residues 399-419 (LPLELGLGSFQGFVVAVLYCF) form a helical membrane-spanning segment. The Cytoplasmic segment spans residues 420 to 464 (LNQEVRTEISRKWYGHDPELLPARRTCTEWTTPPRSRVKVLTSEC).

The protein belongs to the G-protein coupled receptor 2 family. As to expression, pituitary gland.

The protein localises to the cell membrane. Its function is as follows. Receptor for GRF, coupled to G proteins which activate adenylyl cyclase. Stimulates somatotroph cell growth, growth hormone gene transcription and growth hormone secretion. The chain is Growth hormone-releasing hormone receptor (Ghrhr) from Rattus norvegicus (Rat).